A 473-amino-acid polypeptide reads, in one-letter code: Ribulose bisphosphate carboxylase large chain (473 aa).

A propeptide spanning residues 1 to 2 (MS) is cleaved from the precursor. Residue Pro-3 is modified to N-acetylproline. Residue Lys-14 is modified to N6,N6,N6-trimethyllysine. 2 residues coordinate substrate: Asn-123 and Thr-173. The Proton acceptor role is filled by Lys-175. Lys-177 contacts substrate. Mg(2+) is bound by residues Lys-201, Asp-203, and Glu-204. An N6-carboxylysine modification is found at Lys-201. His-294 (proton acceptor) is an active-site residue. Substrate-binding residues include Arg-295, His-327, and Ser-379.

Belongs to the RuBisCO large chain family. Type I subfamily. Heterohexadecamer of 8 large chains and 8 small chains; disulfide-linked. The disulfide link is formed within the large subunit homodimers. Mg(2+) serves as cofactor. Post-translationally, the disulfide bond which can form in the large chain dimeric partners within the hexadecamer appears to be associated with oxidative stress and protein turnover.

The protein localises to the plastid. It localises to the chloroplast. It catalyses the reaction 2 (2R)-3-phosphoglycerate + 2 H(+) = D-ribulose 1,5-bisphosphate + CO2 + H2O. It carries out the reaction D-ribulose 1,5-bisphosphate + O2 = 2-phosphoglycolate + (2R)-3-phosphoglycerate + 2 H(+). Functionally, ruBisCO catalyzes two reactions: the carboxylation of D-ribulose 1,5-bisphosphate, the primary event in carbon dioxide fixation, as well as the oxidative fragmentation of the pentose substrate in the photorespiration process. Both reactions occur simultaneously and in competition at the same active site. The polypeptide is Ribulose bisphosphate carboxylase large chain (Ajuga chamaepitys (Yellow bugle)).